A 120-amino-acid polypeptide reads, in one-letter code: Large ribosomal subunit protein uL18 (120 aa).

Belongs to the universal ribosomal protein uL18 family. As to quaternary structure, part of the 50S ribosomal subunit; part of the 5S rRNA/L5/L18/L25 subcomplex. Contacts the 5S and 23S rRNAs.

In terms of biological role, this is one of the proteins that bind and probably mediate the attachment of the 5S RNA into the large ribosomal subunit, where it forms part of the central protuberance. This chain is Large ribosomal subunit protein uL18, found in Herminiimonas arsenicoxydans.